The chain runs to 60 residues: Disagregin (60 aa).

The Cell attachment site; atypical signature appears at 14–16 (RED).

As to expression, expressed in salivary glands.

Its subcellular location is the secreted. Its function is as follows. Tick salivary platelet aggregation inhibitor that plays an important part in the anti-hemostatic strategy of ticks. Inhibits fibrinogen interaction with platelets. Acts by binding (in a divalent metal ion dependent manner) to the glycoprotein IIb-IIIa receptor (ITGA2B/ITGB3) on the platelet surface and inhibits aggregation induced by ADP (IC(50)=99-104 nM), thrombin, collagen (IC(50)=64 nM) platelet-activating factor and collagen. Interacts to unstimulated platelets (Kd=42.5 nM) and to ADP-stimulated platelets (Kd=39.4 nM). In contrast to many disintegrins which only interact with the beta-3 subunit, interacts with the two subunits (alpha-IIb and beta-3). Under flow conditions, reduces and delays platelet adhesion, aggregation, and fibrin formation. This chain is Disagregin, found in Ornithodoros moubata (Soft tick).